A 694-amino-acid polypeptide reads, in one-letter code: Frizzled-8 (694 aa).

The N-terminal stretch at 1–27 is a signal peptide; the sequence is MEWGYLLEVTSLLAALALLQRSSGAAA. At 28–275 the chain is on the extracellular side; that stretch reads ASAKELACQE…NPFFSQDERA (248 aa). Positions 30-151 constitute an FZ domain; that stretch reads AKELACQEIT…GNPDTLCMDY (122 aa). 5 disulfides stabilise this stretch: Cys-35-Cys-96, Cys-43-Cys-89, Cys-80-Cys-118, Cys-107-Cys-148, and Cys-111-Cys-135. A glycan (N-linked (GlcNAc...) asparagine) is linked at Asn-49. 71 to 78 serves as a coordination point for hexadecanoate; it reads QFWPLVEI. The segment at 95 to 100 is wnt-binding; that stretch reads ICLEDY. The tract at residues 147 to 152 is wnt-binding; sequence LCMDYN. Asn-152 is a glycosylation site (N-linked (GlcNAc...) asparagine). Positions 155–226 are disordered; it reads DLTTAAPSPP…KARPPGGGAA (72 aa). A compositionally biased stretch (pro residues) spans 161-175; the sequence is PSPPRRLPPPPPGEQ. Residues 176-186 are compositionally biased toward low complexity; sequence PPSGSGHGRPP. Over residues 210–225 the composition is skewed to gly residues; it reads RGGGGGGKARPPGGGA. Residues 276-296 traverse the membrane as a helical segment; sequence FTVFWIGLWSVLCFVSTFATV. Topologically, residues 297–312 are cytoplasmic; it reads STFLIDMERFKYPERP. A helical transmembrane segment spans residues 313–333; sequence IIFLSACYLFVSVGYLVRLVA. Topologically, residues 334–396 are extracellular; sequence GHEKVACSGG…RYETTGPALC (63 aa). Residues 397–417 form a helical membrane-spanning segment; it reads TVVFLLVYFFGMASSIWWVIL. Residues 418–439 are Cytoplasmic-facing; it reads SLTWFLAAGMKWGNEAIAGYSQ. The chain crosses the membrane as a helical span at residues 440–460; it reads YFHLAAWLVPSVKSIAVLALS. The Extracellular segment spans residues 461-483; sequence SVDGDPVAGICYVGNQSLDNLRG. A glycan (N-linked (GlcNAc...) asparagine) is linked at Asn-475. A helical transmembrane segment spans residues 484–504; that stretch reads FVLAPLVIYLFIGTMFLLAGF. Residues 505 to 532 lie on the Cytoplasmic side of the membrane; that stretch reads VSLFRIRSVIKQQDGPTKTHKLEKLMIR. The chain crosses the membrane as a helical span at residues 533-553; the sequence is LGLFTVLYTVPAAVVVACLFY. The Extracellular segment spans residues 554–584; it reads EQHNRPRWEATHNCPCLRDLQPDQARRPDYA. The helical transmembrane segment at 585 to 605 threads the bilayer; it reads VFMLKYFMCLVVGITSGVWVW. Residues 606–694 are Cytoplasmic-facing; that stretch reads SGKTLESWRS…YPKQMPLSQV (89 aa). The Lys-Thr-X-X-X-Trp motif, mediates interaction with the PDZ domain of Dvl family members signature appears at 608 to 613; it reads KTLESW. The segment covering 648–664 has biased composition (gly residues); that stretch reads GGGGPGGGGGPGGGGGS. The interval 648–668 is disordered; that stretch reads GGGGPGGGGGPGGGGGSLYSD. A PDZ-binding motif is present at residues 692-694; it reads SQV.

The protein belongs to the G-protein coupled receptor Fz/Smo family. Component of a Wnt-signaling complex that contains a WNT protein, a FZD protein and LRP5 or LRP6. Interacts directly with LRP5 or LRP6; the interaction is promoted by Wnt-binding and signaling and inhibited by DKK1. Interacts with GPOC, RSPO1 and RSPO3. Interacts with glypican GPC3. Ubiquitinated by ZNRF3, leading to its degradation by the proteasome. As to expression, most abundant in fetal kidney, followed by brain and lung. In adult tissues, expressed in kidney, heart, pancreas and skeletal muscle.

Its subcellular location is the membrane. It is found in the golgi apparatus. The protein localises to the cell membrane. Functionally, receptor for Wnt proteins. Component of the Wnt-Fzd-LRP5-LRP6 complex that triggers beta-catenin signaling through inducing aggregation of receptor-ligand complexes into ribosome-sized signalosomes. The beta-catenin canonical signaling pathway leads to the activation of disheveled proteins, inhibition of GSK-3 kinase, nuclear accumulation of beta-catenin and activation of Wnt target genes. A second signaling pathway involving PKC and calcium fluxes has been seen for some family members, but it is not yet clear if it represents a distinct pathway or if it can be integrated in the canonical pathway, as PKC seems to be required for Wnt-mediated inactivation of GSK-3 kinase. Both pathways seem to involve interactions with G-proteins. May be involved in transduction and intercellular transmission of polarity information during tissue morphogenesis and/or in differentiated tissues. Coreceptor along with RYK of Wnt proteins, such as WNT1. In Homo sapiens (Human), this protein is Frizzled-8 (FZD8).